The following is a 208-amino-acid chain: Thymidylate kinase (208 aa).

An ATP-binding site is contributed by 10–17 (GPEGSGKT).

It belongs to the thymidylate kinase family.

It carries out the reaction dTMP + ATP = dTDP + ADP. Functionally, phosphorylation of dTMP to form dTDP in both de novo and salvage pathways of dTTP synthesis. In Bacillus cereus (strain B4264), this protein is Thymidylate kinase.